The following is a 709-amino-acid chain: ATP-binding cassette sub-family F member 3 (709 aa).

Ala-2 carries the N-acetylalanine modification. Ser-83 carries the post-translational modification Phosphoserine. Positions 129-143 are enriched in basic and acidic residues; sequence RLKAKQEKRSEKETL. Residues 129 to 171 form a disordered region; it reads RLKAKQEKRSEKETLKTSNPLVLEEASASQAGSRKESRLESSG. Residues Ser-155, Ser-157, and Ser-161 each carry the phosphoserine modification. Positions 161-171 are enriched in basic and acidic residues; it reads SRKESRLESSG. 2 consecutive ABC transporter domains span residues 178-424 and 492-707; these read VRIE…LNQQ and LQLD…RREG. ATP is bound at residue 210–217; that stretch reads GRNGLGKT. A Phosphoserine modification is found at Ser-283. ATP is bound at residue 525–532; it reads GENGAGKS.

The protein belongs to the ABC transporter superfamily. ABCF family. EF3 subfamily.

Displays an antiviral effect against flaviviruses such as west Nile virus (WNV) in the presence of OAS1B. This Mus musculus (Mouse) protein is ATP-binding cassette sub-family F member 3 (Abcf3).